The chain runs to 1039 residues: Potassium-transporting ATPase alpha chain 2 (1039 aa).

Residues 1-102 (MHQKTPEIYS…NSLTPPKQTP (102 aa)) lie on the Cytoplasmic side of the membrane. A helical transmembrane segment spans residues 103–123 (EIVKFLKQMVGGFSILLWVGA). Topologically, residues 124–146 (FLCWIAYGIQYSSDKSASLNNVY) are lumenal. The helical transmembrane segment at 147 to 167 (LGCVLGLVVILTGIFAYYQEA) threads the bilayer. Over 168 to 303 (KSTNIMSSFN…NEKTPIAIEI (136 aa)) the chain is Cytoplasmic. Residues 304-323 (EHFVHIVAGVAVSIGILFFI) form a helical membrane-spanning segment. The Lumenal segment spans residues 324 to 335 (IAVSLKYQVLDS). The chain crosses the membrane as a helical span at residues 336–353 (IIFLIGIIVANVPEGLLA). Over 354 to 787 (TVTVTLSLTA…EEGRLIFDNL (434 aa)) the chain is Cytoplasmic. The active-site 4-aspartylphosphate intermediate is D391. Mg(2+) is bound by residues D732 and D736. The chain crosses the membrane as a helical span at residues 788–807 (KKTIAYSLTKNIAELCPFLI). Residues 808–817 (YIIVGLPLPI) lie on the Lumenal side of the membrane. Residues 818-838 (GTITILFIDLGTDIIPSIALA) traverse the membrane as a helical segment. The Cytoplasmic segment spans residues 839-858 (YEKAESDIMNRKPRHKNKDR). Residues 859 to 881 (LVNQPLAVYSYLHIGLMQALGAF) form a helical membrane-spanning segment. Over 882–933 (LVYFTVYAQEGFLPRTLINLRVEWEKDYVNDLKDSYGQEWTRYQREYLEWTG) the chain is Lumenal. Residues 934–953 (YTAFFVGILVQQIADLIIRK) form a helical membrane-spanning segment. Topologically, residues 954-967 (TRRNSIFQQGLFRN) are cytoplasmic. Phosphoserine; by PKA is present on S958. Residues 968–986 (KVIWVGITSQIIIGLILSY) form a helical membrane-spanning segment. The Lumenal segment spans residues 987–1001 (GLGSVTALSFTMLRA). Residues 1002–1022 (QYWFVAVPHAILIWVYDEVRK) form a helical membrane-spanning segment. The Cytoplasmic segment spans residues 1023-1039 (LFIRLYPGSWWDKNMYY).

Belongs to the cation transport ATPase (P-type) (TC 3.A.3) family. Type IIC subfamily. The ATPase pump is composed of a catalytic alpha subunit and an auxiliary non-catalytic beta subunit. The alpha subunit pairs with the beta subunit of gastric H(+)/K(+) ATPase ATP4B or the beta subunit of Na(+)/K(+) ATPases ATP1B1 and ATP1B3; this interaction is required for the formation of a functionally active pump and its targeting at the plasma membrane. As to expression, expressed in airway epithelial cells (at protein level). Found in skin and kidney. Detected in prostate basal cells (at protein level). Expression is increased in benign prostate hyperplasia and tumor tissues (at protein level).

It is found in the apical cell membrane. The catalysed reaction is K(+)(out) + ATP + H2O + H(+)(in) = K(+)(in) + ADP + phosphate + 2 H(+)(out). It carries out the reaction K(+)(out) + Na(+)(in) + ATP + H2O = K(+)(in) + Na(+)(out) + ADP + phosphate + H(+). The ATPase activity is regulated by monovalent cations and pH. Up-regulated by K(+) ions in a dose-dependent way. Down-regulated by Na(+) ions. Inhibited by Na(+)/K(+)-ATPase inhibitor ouabain and H(+)/K(+)-ATPase inhibitor SCH-28080 with an intermediate sensitivity to completely resistant Na(+)/K(+)-ATPases and highly sensitive H(+)/K(+)-ATPases. Functionally, the catalytic subunit of a H(+)/K(+) ATPase and/or Na(+)/K(+) ATPase pump which transports K(+) ions in exchange for Na(+) and/or H(+) ions across the apical membrane of epithelial cells. Uses ATP as an energy source to pump K(+) ions into the cell while transporting Na(+) and/or H(+) ions to the extracellular compartment. Involved in the maintenance of electrolyte homeostasis through K(+) ion absorption in kidney and colon. In the airway epithelium, may play a primary role in mucus acidification regulating its viscosity and clearance. In Homo sapiens (Human), this protein is Potassium-transporting ATPase alpha chain 2.